Consider the following 141-residue polypeptide: Hemoglobin subunit alpha (141 aa).

Positions 1 to 141 (VLSAEDKANV…VSTVLTSKYR (141 aa)) constitute a Globin domain. Phosphoserine is present on Ser3. 2 positions are modified to N6-succinyllysine: Lys7 and Lys11. Lys16 is subject to N6-acetyllysine; alternate. Position 16 is an N6-succinyllysine; alternate (Lys16). Position 24 is a phosphotyrosine (Tyr24). Position 35 is a phosphoserine (Ser35). The residue at position 40 (Lys40) is an N6-succinyllysine. Residue Ser49 is modified to Phosphoserine. Residue His58 coordinates O2. Position 87 (His87) interacts with heme b. Phosphoserine is present on Ser102. Thr108 bears the Phosphothreonine mark. A phosphoserine mark is found at Ser124 and Ser131. Phosphothreonine is present on residues Thr134 and Thr137. At Ser138 the chain carries Phosphoserine.

The protein belongs to the globin family. As to quaternary structure, heterotetramer of two alpha chains and two beta chains. Red blood cells.

In terms of biological role, involved in oxygen transport from the lung to the various peripheral tissues. This Peromyscus crinitus (Canyon mouse) protein is Hemoglobin subunit alpha.